Here is a 252-residue protein sequence, read N- to C-terminus: 5-oxoprolinase subunit A (252 aa).

This sequence belongs to the LamB/PxpA family. Forms a complex composed of PxpA, PxpB and PxpC.

It catalyses the reaction 5-oxo-L-proline + ATP + 2 H2O = L-glutamate + ADP + phosphate + H(+). Its function is as follows. Catalyzes the cleavage of 5-oxoproline to form L-glutamate coupled to the hydrolysis of ATP to ADP and inorganic phosphate. The chain is 5-oxoprolinase subunit A from Kocuria rhizophila (strain ATCC 9341 / DSM 348 / NBRC 103217 / DC2201).